A 151-amino-acid polypeptide reads, in one-letter code: MSNLEKSLRHEVILDIIESKCICKQEELIIELKECGINVTQATLSRDLHEMNIIRKSFENHEHRYIVTKEDKFIKKFKNIFKSSVRSISMQEYFISVNTLDGMASLIGEFIDRLGDGRIAGTVAKKNHILVLCRSVNATQQIFKELDSLRV.

Belongs to the ArgR family.

The protein resides in the cytoplasm. The protein operates within amino-acid degradation; L-arginine degradation via ADI pathway. Regulates the transcription of the arc operon, involved in arginine catabolism. This chain is Arginine regulator (argR1), found in Clostridium perfringens (strain 13 / Type A).